The following is an 88-amino-acid chain: Small ribosomal subunit protein uS17 (88 aa).

It belongs to the universal ribosomal protein uS17 family. In terms of assembly, part of the 30S ribosomal subunit.

In terms of biological role, one of the primary rRNA binding proteins, it binds specifically to the 5'-end of 16S ribosomal RNA. The chain is Small ribosomal subunit protein uS17 from Prochlorococcus marinus (strain NATL1A).